A 219-amino-acid chain; its full sequence is Putative germin-like protein 8-1 (219 aa).

The N-terminal stretch at 1 to 23 (MASFISFLLLAALIGMASWQAIA) is a signal peptide. Cysteine 33 and cysteine 48 form a disulfide bridge. Residues asparagine 53 and asparagine 79 are each glycosylated (N-linked (GlcNAc...) asparagine). The 153-residue stretch at 63 to 215 (AMLDKPRDTA…AFQVDKKIID (153 aa)) folds into the Cupin type-1 domain. Mn(2+) contacts are provided by histidine 112, histidine 114, glutamate 119, and histidine 160.

Belongs to the germin family. Oligomer (believed to be a pentamer but probably hexamer).

The protein resides in the secreted. Its subcellular location is the extracellular space. It is found in the apoplast. In terms of biological role, plays a role in broad-spectrum disease resistance. Probably has no oxalate oxidase activity even if the active site is conserved. This Oryza sativa subsp. japonica (Rice) protein is Putative germin-like protein 8-1.